A 410-amino-acid polypeptide reads, in one-letter code: ORC1-type DNA replication protein 4 (410 aa).

Residues 73-77 (TGKSL), Y220, and R232 each bind ATP.

The protein belongs to the CDC6/cdc18 family.

In terms of biological role, involved in regulation of DNA replication. This is ORC1-type DNA replication protein 4 (orc4) from Halobacterium salinarum (strain ATCC 700922 / JCM 11081 / NRC-1) (Halobacterium halobium).